Consider the following 116-residue polypeptide: Mitochondrial import inner membrane translocase subunit PAM16 like 2 (116 aa).

The N-terminal 27 residues, 1-27 (MAGRLLANLIVMGSGIIGRAVFQAYRQ), are a transit peptide targeting the mitochondrion. Residues 57–106 (EARQILGVTEKTSWEEILQKYDKLFENNAKAGSFYLQSKVHRAKECLEVV) are J-like.

The protein belongs to the TIM16/PAM16 family. In terms of tissue distribution, expressed constitutively and ubiquitously, except in root tips, at low levels.

The protein resides in the mitochondrion inner membrane. It localises to the cytoplasm. Regulates ATP-dependent protein translocation into the mitochondrial matrix. Involved in the uptake of thaxtomin, a phytotoxin produced by Streptomyces bacteria, that causes dramatic cell swelling, reduced seedling growth, and inhibition of cellulose synthesis. Modulates polar auxin transport. Involved in importing a negative regulator of plant immunity into mitochondria, thus protecting plants from over-accumulation of reactive oxygen species (ROS) and preventing autoimmunity. Confers sensitivity to virulent pathogens such as the oomycete H.arabidopsidis Noco2 and the bacteria P.syringae pv. maculicola ES4326. The protein is Mitochondrial import inner membrane translocase subunit PAM16 like 2 of Arabidopsis thaliana (Mouse-ear cress).